A 301-amino-acid polypeptide reads, in one-letter code: Sulfate adenylyltransferase subunit 2 (301 aa).

Belongs to the PAPS reductase family. CysD subfamily. In terms of assembly, heterodimer composed of CysD, the smaller subunit, and CysN.

It carries out the reaction sulfate + ATP + H(+) = adenosine 5'-phosphosulfate + diphosphate. Its pathway is sulfur metabolism; hydrogen sulfide biosynthesis; sulfite from sulfate: step 1/3. With CysN forms the ATP sulfurylase (ATPS) that catalyzes the adenylation of sulfate producing adenosine 5'-phosphosulfate (APS) and diphosphate, the first enzymatic step in sulfur assimilation pathway. APS synthesis involves the formation of a high-energy phosphoric-sulfuric acid anhydride bond driven by GTP hydrolysis by CysN coupled to ATP hydrolysis by CysD. The polypeptide is Sulfate adenylyltransferase subunit 2 (Geotalea daltonii (strain DSM 22248 / JCM 15807 / FRC-32) (Geobacter daltonii)).